A 497-amino-acid chain; its full sequence is NADH-quinone oxidoreductase subunit N (497 aa).

The next 13 helical transmembrane spans lie at 12 to 32 (MAPEWIVLAAAIALLVMDLAL), 40 to 60 (PLAWGAAAAAALAMIATAAMI), 80 to 100 (AFKFILLAGGALALLLVAEWA), 116 to 136 (LFALLGAMMMASSGDLLTLFV), 166 to 186 (VINGGIATAIMLFGMSYVFGL), 208 to 228 (LALAFLLLLIGVSFKLATVPF), 240 to 260 (PVPATAFFAVVSKTAGFALLL), 284 to 304 (MQPIITVLAGLTMIIGSVVAL), 316 to 336 (SGIAHAGYLLAGFAAMSWAMI), 341 to 361 (MYLLVYTLMNIGAFAIIAHIV), 383 to 403 (AAALGLFLLSLAGIPGTAGFI), 430 to 450 (TVISYVYYFNLIVQLFFRPTF), and 457 to 477 (LPAGLSTAVVLCALGTLAIGW).

Belongs to the complex I subunit 2 family. NDH-1 is composed of 14 different subunits. Subunits NuoA, H, J, K, L, M, N constitute the membrane sector of the complex.

It localises to the cell membrane. It carries out the reaction a quinone + NADH + 5 H(+)(in) = a quinol + NAD(+) + 4 H(+)(out). NDH-1 shuttles electrons from NADH, via FMN and iron-sulfur (Fe-S) centers, to quinones in the respiratory chain. The immediate electron acceptor for the enzyme in this species is believed to be a menaquinone. Couples the redox reaction to proton translocation (for every two electrons transferred, four hydrogen ions are translocated across the cytoplasmic membrane), and thus conserves the redox energy in a proton gradient. In Geobacillus kaustophilus (strain HTA426), this protein is NADH-quinone oxidoreductase subunit N.